The chain runs to 1014 residues: EMILIN-1-A (1014 aa).

Positions 1–27 (MALYFVYLSTLLALILLGDNWAAGTYA) are cleaved as a signal peptide. The region spanning 53–128 (HRNWCAYVVT…HGYSGDDCSD (76 aa)) is the EMI domain. Intrachain disulfides connect cysteine 57/cysteine 118, cysteine 84/cysteine 89, and cysteine 117/cysteine 126. Disordered regions lie at residues 125–150 (DCSD…SDSD) and 811–869 (QDFT…ANVP). Positions 134–150 (HDSRARPTGEEGRSDSD) are enriched in basic and acidic residues. Residues 145 to 179 (GRSDSDRIRQLEEQIQSLNKNLHNLQKKIYEESQR) are a coiled coil. The region spanning 815-865 (GPPGLPGPQGEKGSKGPPGPRGPLGKEGPQGRVGPVGPPGLRGEQGPPGKD) is the Collagen-like domain. The segment covering 840 to 856 (KEGPQGRVGPVGPPGLR) has biased composition (low complexity). The C1q domain occupies 866–1012 (ANVPRLSFSA…GMLLYEESED (147 aa)).

Its subcellular location is the secreted. The protein resides in the extracellular space. It is found in the extracellular matrix. May be responsible for anchoring smooth muscle cells to elastic fibers, and may be involved not only in the formation of the elastic fiber, but also in the processes that regulate vessel assembly. Has cell adhesive capacity. This chain is EMILIN-1-A, found in Danio rerio (Zebrafish).